The sequence spans 511 residues: Tyrosine--tRNA ligase, chloroplastic/mitochondrial (511 aa).

An L-tyrosine-binding site is contributed by Y118. D122 is an ATP binding site. The short motif at 123-132 (PTAESLHLGN) is the 'HIGH' region element. L-tyrosine is bound by residues D162, Y256, Q260, D263, and Q282. The 'KMSKS' region signature appears at 318–322 (KFGKS). K321 contributes to the ATP binding site. The 67-residue stretch at 444–510 (LSIVDLSVSA…GKKNKVVVRI (67 aa)) folds into the S4 RNA-binding domain.

Belongs to the class-I aminoacyl-tRNA synthetase family.

The protein resides in the plastid. It is found in the chloroplast. The protein localises to the mitochondrion. The enzyme catalyses tRNA(Tyr) + L-tyrosine + ATP = L-tyrosyl-tRNA(Tyr) + AMP + diphosphate + H(+). In terms of biological role, catalyzes the attachment of tyrosine to tRNA(Tyr) in a two-step reaction: tyrosine is first activated by ATP to form Tyr-AMP and then transferred to the acceptor end of tRNA(Tyr). This is Tyrosine--tRNA ligase, chloroplastic/mitochondrial from Arabidopsis thaliana (Mouse-ear cress).